A 464-amino-acid chain; its full sequence is Gasdermin-A3 (464 aa).

A triggers pyroptosis region spans residues 1–261; the sequence is MPVFEDVTRA…EEPEEEKLIG (261 aa). 9–13 is a binding site for a cardiolipin; it reads RALVR. 4 beta stranded membrane passes run 78 to 95, 99 to 120, 164 to 180, and 184 to 198; these read NFSF…LVEV, VKVK…TLSV, VTVE…SLPS, and LGLQ…AVTI. Positions 255-327 form a coiled coil; it reads EEEKLIGEMH…DKGQKVTLEA (73 aa).

Belongs to the gasdermin family. As to quaternary structure, homooligomer; homooligomeric ring-shaped pore complex containing 18-36 subunits when inserted in the membrane. Cleavage relieves autoinhibition by releasing the N-terminal moiety (Gasdermin-A3, N-terminal) that initiates pyroptosis. In contrast to Gsdma, not cleaved by bacterial effector protein SpeB. Post-translationally, palmitoylated. Highest levels in skin with weak expression in placenta and testis. Not detected in the gastrointestinal tract. In skin, expressed in postnatal hair follicles and epidermis as well as sebaceous gland basal cells.

It localises to the cytoplasm. Its subcellular location is the cytosol. The protein localises to the cell membrane. It is found in the mitochondrion membrane. With respect to regulation, the full-length protein before cleavage is inactive: intramolecular interactions between N- and C-terminal domains mediate autoinhibition in the absence of activation signal. The intrinsic pyroptosis-inducing activity is carried by the released N-terminal moiety (Gasdermin-A3, N-terminal). In terms of biological role, precursor of a pore-forming protein involved in the transition from catagen to telogen at the end of hair follicle morphogenesis. This form constitutes the precursor of the pore: upon cleavage, the released N-terminal moiety (Gasdermin-A3, N-terminal) binds to membranes and forms pores, triggering pyroptosis. This form acts as a sensor of infection: activation is triggered by cleavage by some bacterial effector protein, which releases the N-terminal moiety (Gasdermin-A3, N-terminal). Its function is as follows. Pore-forming protein that causes membrane permeabilization and pyroptosis. Released upon cleavage by some bacterial effector protein, and binds to membrane inner leaflet lipids. Homooligomerizes within the membrane and forms pores of 10-15 nanometers (nm) of inner diameter, allowing the release of mature interleukin-1 (IL1B and IL18) and triggering pyroptosis. Binds to membrane inner leaflet lipids, including bisphosphorylated phosphatidylinositols, such as phosphatidylinositol (4,5)-bisphosphate, as well as phosphatidylinositol (3,4,5)-bisphosphate, and more weakly to monophosphorylated phosphatidylinositols. Also binds to bacterial and mitochondrial lipids, including cardiolipin, and exhibits bactericidal activity. Plays a role in the transition from catagen to telogen at the end of hair follicle morphogenesis, possibly by regulating hair follicle stem cell niche maintenance. Also required for mammary gland development. This is Gasdermin-A3 from Mus musculus (Mouse).